Consider the following 112-residue polypeptide: Nitrogenase-stabilizing/protective protein NifW (112 aa).

The protein belongs to the NifW family. Homotrimer; associates with NifD.

Its function is as follows. May protect the nitrogenase Fe-Mo protein from oxidative damage. This chain is Nitrogenase-stabilizing/protective protein NifW, found in Rhodopseudomonas palustris (strain BisA53).